The primary structure comprises 172 residues: Cystatin-like cysteine protease inhibitor EPIC4 (172 aa).

Positions 1-17 (MRASLSILVAFPALAAA) are cleaved as a signal peptide. Positions 71-75 (QVVAG) match the Secondary area of contact motif. The interval 129 to 172 (EAATASSSSTPAPTPASTSTSASSSEETMLQSSVQQRAMFSDFV) is disordered. Positions 130–156 (AATASSSSTPAPTPASTSTSASSSEET) are enriched in low complexity. Over residues 157–166 (MLQSSVQQRA) the composition is skewed to polar residues.

It belongs to the cystatin family.

It is found in the secreted. Its function is as follows. Secreted effector that interacts with and inhibits host apoplastic pathogenesis-related papain-like cysteine proteases. Inhibition of host proteases by a pathogen extracellular protease inhibitor forms a specific type of defense-counterdefense mechanism between plants and microbial pathogens. The chain is Cystatin-like cysteine protease inhibitor EPIC4 from Phytophthora infestans (Potato late blight agent).